Reading from the N-terminus, the 173-residue chain is Shikimate kinase 1 (173 aa).

Residue 14 to 19 (GAGKST) coordinates ATP. Serine 18 lines the Mg(2+) pocket. Substrate-binding residues include aspartate 36, arginine 60, and glycine 82. Arginine 120 serves as a coordination point for ATP. Residue arginine 140 participates in substrate binding.

Belongs to the shikimate kinase family. In terms of assembly, monomer. Mg(2+) serves as cofactor.

It is found in the cytoplasm. The catalysed reaction is shikimate + ATP = 3-phosphoshikimate + ADP + H(+). It participates in metabolic intermediate biosynthesis; chorismate biosynthesis; chorismate from D-erythrose 4-phosphate and phosphoenolpyruvate: step 5/7. In terms of biological role, catalyzes the specific phosphorylation of the 3-hydroxyl group of shikimic acid using ATP as a cosubstrate. The protein is Shikimate kinase 1 of Hamiltonella defensa subsp. Acyrthosiphon pisum (strain 5AT).